We begin with the raw amino-acid sequence, 33 residues long: Putative makorin-5 (33 aa).

The protein is Putative makorin-5 (MKRN9P) of Homo sapiens (Human).